A 343-amino-acid polypeptide reads, in one-letter code: MKSIRMLMVMLALDDLLKNPYETFRIADELRRELVGDTVTYVVNRNINFTDICINDCKFCSFRNRKKYLLSLDEIKQKVEEAVEFGCTELCIQGGLLPDADLDFYLSILQAVRDVDKKIHIHAFSPMEVVHAARNSGMTVEEVLKELKKEGLGSMPGTAAEILDDSIRALICPRKLKTAEWVEVIKTAHRVGIPTTATIMYGHIDTWEHRINHLLLIKKIQQETGGITELIPLPFMSKNNELGRYAKGSSGFDDLLMIAIARILLYPEIKNIQASWVKMGQKLAQAALHVGANDLGGTLMEENISKSAGATSGEFMHPEELRELIKIAGRVPKQRDTLYNILD.

Residues 39 to 268 (VTYVVNRNIN…AIARILLYPE (230 aa)) enclose the Radical SAM core domain. [4Fe-4S] cluster-binding residues include cysteine 53, cysteine 57, and cysteine 60.

The protein belongs to the radical SAM superfamily. CofH family. As to quaternary structure, consists of two subunits, CofG and CofH. Requires [4Fe-4S] cluster as cofactor.

The enzyme catalyses 5-amino-6-(D-ribitylamino)uracil + L-tyrosine + S-adenosyl-L-methionine = 5-amino-5-(4-hydroxybenzyl)-6-(D-ribitylimino)-5,6-dihydrouracil + 2-iminoacetate + 5'-deoxyadenosine + L-methionine + H(+). The protein operates within cofactor biosynthesis; coenzyme F0 biosynthesis. Functionally, catalyzes the radical-mediated synthesis of 5-amino-5-(4-hydroxybenzyl)-6-(D-ribitylimino)-5,6-dihydrouracil from 5-amino-6-(D-ribitylamino)uracil and L-tyrosine. The polypeptide is 5-amino-6-(D-ribitylamino)uracil--L-tyrosine 4-hydroxyphenyl transferase (Archaeoglobus fulgidus (strain ATCC 49558 / DSM 4304 / JCM 9628 / NBRC 100126 / VC-16)).